Reading from the N-terminus, the 117-residue chain is Large ribosomal subunit protein bL19 (117 aa).

Belongs to the bacterial ribosomal protein bL19 family.

This protein is located at the 30S-50S ribosomal subunit interface and may play a role in the structure and function of the aminoacyl-tRNA binding site. The chain is Large ribosomal subunit protein bL19 from Christiangramia forsetii (strain DSM 17595 / CGMCC 1.15422 / KT0803) (Gramella forsetii).